Reading from the N-terminus, the 78-residue chain is Large ribosomal subunit protein bL28 (78 aa).

This sequence belongs to the bacterial ribosomal protein bL28 family.

This Psychrobacter arcticus (strain DSM 17307 / VKM B-2377 / 273-4) protein is Large ribosomal subunit protein bL28.